The sequence spans 93 residues: MAPGKAPAGHFSILYFAAASTFTGKTSEHLPAPVRARHVFTMLEERYPGIGDKVLSSCAVTVNLEYVDIGEEDAEQQIEEGDEVAIIPPVSSG.

1-thioglycine; alternate is present on Gly93. The residue at position 93 (Gly93) is a Glycyl adenylate; alternate.

The protein belongs to the MoaD family. MOCS2A subfamily. As to quaternary structure, heterotetramer; composed of 2 small (MOCS2A) and 2 large (MOCS2B) subunits. In terms of processing, C-terminal thiocarboxylation occurs in 2 steps, it is first acyl-adenylated (-COAMP) via the hesA/moeB/thiF part of uba4, then thiocarboxylated (-COSH) via the rhodanese domain of uba4.

Its subcellular location is the cytoplasm. The protein operates within cofactor biosynthesis; molybdopterin biosynthesis. Functionally, acts as a sulfur carrier required for molybdopterin biosynthesis. Component of the molybdopterin synthase complex that catalyzes the conversion of precursor Z into molybdopterin by mediating the incorporation of 2 sulfur atoms into precursor Z to generate a dithiolene group. In the complex, serves as sulfur donor by being thiocarboxylated (-COSH) at its C-terminus by uba4. After interaction with MOCS2B, the sulfur is then transferred to precursor Z to form molybdopterin. This chain is Molybdopterin synthase sulfur carrier subunit, found in Pyrenophora tritici-repentis (strain Pt-1C-BFP) (Wheat tan spot fungus).